Reading from the N-terminus, the 102-residue chain is Lipopolysaccharide assembly protein A (102 aa).

The Cytoplasmic portion of the chain corresponds to 1-2 (MK). Residues 3–23 (YLLIFLLVLAIFVISVTLGAQ) form a helical membrane-spanning segment. Residues 24 to 43 (NDQQVTFNYLLAQGEYRIST) lie on the Periplasmic side of the membrane. A helical membrane pass occupies residues 44-64 (LLAVLFAAGFAIGWLICGLFW). A coiled-coil region spans residues 64–92 (WLRVRVSLARAERKIKRLENQLSPATDVA). The Cytoplasmic portion of the chain corresponds to 65–102 (LRVRVSLARAERKIKRLENQLSPATDVAVVPHSSAAKE).

It belongs to the LapA family.

The protein localises to the cell inner membrane. In terms of biological role, involved in the assembly of lipopolysaccharide (LPS). This Escherichia coli (strain K12) protein is Lipopolysaccharide assembly protein A.